Consider the following 337-residue polypeptide: Anthranilate phosphoribosyltransferase (337 aa).

Residues G81, 84–85, S89, 91–94, 109–117, and A121 contribute to the 5-phospho-alpha-D-ribose 1-diphosphate site; these read GD, NVST, and KHGNRAASS. G81 is an anthranilate binding site. Residue S93 participates in Mg(2+) binding. N112 contributes to the anthranilate binding site. R167 contacts anthranilate. Residues D226 and E227 each coordinate Mg(2+).

It belongs to the anthranilate phosphoribosyltransferase family. In terms of assembly, homodimer. The cofactor is Mg(2+).

The catalysed reaction is N-(5-phospho-beta-D-ribosyl)anthranilate + diphosphate = 5-phospho-alpha-D-ribose 1-diphosphate + anthranilate. It functions in the pathway amino-acid biosynthesis; L-tryptophan biosynthesis; L-tryptophan from chorismate: step 2/5. In terms of biological role, catalyzes the transfer of the phosphoribosyl group of 5-phosphorylribose-1-pyrophosphate (PRPP) to anthranilate to yield N-(5'-phosphoribosyl)-anthranilate (PRA). This is Anthranilate phosphoribosyltransferase from Methylobacterium sp. (strain 4-46).